We begin with the raw amino-acid sequence, 349 residues long: Phosphoribosylformylglycinamidine cyclo-ligase (349 aa).

It belongs to the AIR synthase family.

The protein localises to the cytoplasm. It carries out the reaction 2-formamido-N(1)-(5-O-phospho-beta-D-ribosyl)acetamidine + ATP = 5-amino-1-(5-phospho-beta-D-ribosyl)imidazole + ADP + phosphate + H(+). It participates in purine metabolism; IMP biosynthesis via de novo pathway; 5-amino-1-(5-phospho-D-ribosyl)imidazole from N(2)-formyl-N(1)-(5-phospho-D-ribosyl)glycinamide: step 2/2. This chain is Phosphoribosylformylglycinamidine cyclo-ligase, found in Lactobacillus helveticus (strain DPC 4571).